Here is a 520-residue protein sequence, read N- to C-terminus: Apolipoprotein N-acyltransferase (520 aa).

7 consecutive transmembrane segments (helical) span residues 12–32 (IFTY…FSPF), 33–53 (DYWG…KTAE), 58–78 (LWSA…WVHV), 93–113 (VLVL…AYLI), 122–142 (AMFP…FTGF), 168–188 (VTFF…VLLI), and 193–213 (WNVV…SAYS). One can recognise a CN hydrolase domain in the interval 232–479 (AQGNIEQNLK…ETTLTHKVAA (248 aa)). The active-site Proton acceptor is the glutamate 272. Lysine 338 is a catalytic residue. The active-site Nucleophile is the cysteine 390. The chain crosses the membrane as a helical span at residues 484 to 504 (TPYAVFGNTAIYGLSLLLLLM).

Belongs to the CN hydrolase family. Apolipoprotein N-acyltransferase subfamily.

The protein localises to the cell inner membrane. It catalyses the reaction N-terminal S-1,2-diacyl-sn-glyceryl-L-cysteinyl-[lipoprotein] + a glycerophospholipid = N-acyl-S-1,2-diacyl-sn-glyceryl-L-cysteinyl-[lipoprotein] + a 2-acyl-sn-glycero-3-phospholipid + H(+). Its pathway is protein modification; lipoprotein biosynthesis (N-acyl transfer). In terms of biological role, catalyzes the phospholipid dependent N-acylation of the N-terminal cysteine of apolipoprotein, the last step in lipoprotein maturation. This Pasteurella multocida (strain Pm70) protein is Apolipoprotein N-acyltransferase.